A 199-amino-acid polypeptide reads, in one-letter code: Protein GrpE (199 aa).

Positions 1–24 are enriched in basic and acidic residues; it reads MSKQNKKDWKKFKDEHKEEHKVEN. The tract at residues 1–52 is disordered; sequence MSKQNKKDWKKFKDEHKEEHKVENEILEEETDEESQHQEPALGHPSYTALEE.

Belongs to the GrpE family. In terms of assembly, homodimer.

The protein resides in the cytoplasm. Its function is as follows. Participates actively in the response to hyperosmotic and heat shock by preventing the aggregation of stress-denatured proteins, in association with DnaK and GrpE. It is the nucleotide exchange factor for DnaK and may function as a thermosensor. Unfolded proteins bind initially to DnaJ; upon interaction with the DnaJ-bound protein, DnaK hydrolyzes its bound ATP, resulting in the formation of a stable complex. GrpE releases ADP from DnaK; ATP binding to DnaK triggers the release of the substrate protein, thus completing the reaction cycle. Several rounds of ATP-dependent interactions between DnaJ, DnaK and GrpE are required for fully efficient folding. The sequence is that of Protein GrpE from Legionella pneumophila.